Reading from the N-terminus, the 141-residue chain is uncharacterized protein (141 aa).

Positions 10–117 (IFCDIVQGSI…VPKYETGKGF (108 aa)) constitute an HIT domain. The short motif at 102-106 (HFHLH) is the Histidine triad motif element.

This is an uncharacterized protein from Mycoplasma genitalium (strain ATCC 33530 / DSM 19775 / NCTC 10195 / G37) (Mycoplasmoides genitalium).